The sequence spans 432 residues: Cyclic GMP-AMP synthase (432 aa).

A GTP-binding site is contributed by 110–115 (QGSFQY). 2 residues coordinate Mg(2+): aspartate 129 and aspartate 131. An ATP-binding site is contributed by arginine 180. Position 191 (aspartate 191) interacts with Mg(2+). Serine 255 is a binding site for ATP. Positions 283, 297, and 344 each coordinate GTP. Glycine 432 is covalently cross-linked (Glycyl cysteine dithioester (Gly-Cys) (interchain with C-13 in Cap2)). Glycine 432 participates in a covalent cross-link: Glycyl cysteine dithioester (Gly-Cys) (interchain with C-493 in Cap2). Residue glycine 432 forms a Glycyl cysteine dithioester (Gly-Cys) (interchain with C-513 in Cap2) linkage. Residue glycine 432 forms a Glycyl lysine isopeptide (Gly-Lys) (interchain with K-? in acceptor proteins) linkage.

This sequence belongs to the CD-NTase family. A02 subfamily. As to quaternary structure, a Cap2 dimer is bound on either side by a DncV monomer. Mg(2+) serves as cofactor. In bacteria expressing capV-dncV-cap2-cap3, this protein is conjugated to about 130 cellular proteins by Cap2, most of which are involved in metabolism; more conjugated protein is found in the absence of Cap3. Most conjugation occurs via an isopeptide bond with the epsilon-amine of Lys on the target protein, but Cys-conjugation also occurs, including to Cap2. Conjugation or deconjugation from cellular proteins does not change the DncV activity in vitro, but does so in vivo during infection. Post-translationally, (Microbial infection) During phage T4 infection is conjugated to at least 2 T4 proteins (fibritin (wac) and dexA.2).

The catalysed reaction is GTP + ATP = 3',3'-cGAMP + 2 diphosphate. Primed for activation by Cap2 which conjugates it to cellular proteins. cGAMP production is induced in phage T4 infected cells in a manner that requires Cap2 and Cap3, as well as a C-terminal Ala or Gly residue in this protein. Its function is as follows. Cyclic nucleotide synthase (second messenger synthase) of a CBASS antivirus system. CBASS (cyclic oligonucleotide-based antiphage signaling system) provides immunity against bacteriophages. The CD-NTase protein (DncV, this protein) synthesizes cyclic nucleotides in response to infection; these serve as specific second messenger signals. The signals activate a diverse range of effectors, leading to bacterial cell death and thus abortive phage infection. A type II-A(GA) CBASS system. Functionally, catalyzes the synthesis of 3',3'-cyclic GMP-AMP (cGAMP) from GTP and ATP, a second messenger in cell signal transduction. Its product controls the activity of cGAMP-activated phospholipase CapV, a patatin-like lipase that is a direct cGAMP receptor encoded in the dncV operon. In terms of biological role, protects E.coli against phage infection. When capV and dncV are introduced in E.coli MG1655 there is 1000-fold protection against phage P1; protection against other phage (T2, T4, T5, T6 and lambda-vir) requires the 2 subsequent genes (cap2 and cap3). In another paper the capV-dncV-cap2-cap3 operon gives 10(4)-10(5)-fold protection against phages lambda, T2, T4 and T6, about 1000-fold protection against P1 and 10-fold protection against T5. The chain is Cyclic GMP-AMP synthase from Escherichia coli (strain TW11681).